The sequence spans 68 residues: TxMMSK-03 (68 aa).

Residues 1–19 (MSKLGALLIICLLLFPLTA) form the signal peptide. A propeptide spanning residues 20–50 (VPMDGDQPADRPAERMQDDISFEQHPMFDAT) is cleaved from the precursor. Disulfide bonds link cysteine 53/cysteine 67, cysteine 54/cysteine 63, and cysteine 59/cysteine 66. Proline 65 carries the 4-hydroxyproline; partial modification.

In terms of processing, contains 3 disulfide bonds. As to expression, expressed by the venom duct. Both hydroxylated and non-hydroxylated forms are mostly and only present in part 2 (proximal of the venom bulb) of the venom duct, respectively.

The protein localises to the secreted. In Conus textile (Cloth-of-gold cone), this protein is TxMMSK-03.